A 248-amino-acid polypeptide reads, in one-letter code: tRNA (guanine-N(1)-)-methyltransferase (248 aa).

Residues Gly113 and 133–138 (VGDYVL) contribute to the S-adenosyl-L-methionine site.

The protein belongs to the RNA methyltransferase TrmD family. As to quaternary structure, homodimer.

It localises to the cytoplasm. The enzyme catalyses guanosine(37) in tRNA + S-adenosyl-L-methionine = N(1)-methylguanosine(37) in tRNA + S-adenosyl-L-homocysteine + H(+). Specifically methylates guanosine-37 in various tRNAs. The sequence is that of tRNA (guanine-N(1)-)-methyltransferase from Shewanella oneidensis (strain ATCC 700550 / JCM 31522 / CIP 106686 / LMG 19005 / NCIMB 14063 / MR-1).